We begin with the raw amino-acid sequence, 334 residues long: tRNA-dihydrouridine(20/20a) synthase (334 aa).

FMN is bound by residues 18–20 (PMM) and Q71. C101 acts as the Proton donor in catalysis. FMN-binding positions include K140, H172, 212 to 214 (NGG), and 234 to 235 (GR).

It belongs to the Dus family. DusA subfamily. FMN serves as cofactor.

The enzyme catalyses 5,6-dihydrouridine(20) in tRNA + NADP(+) = uridine(20) in tRNA + NADPH + H(+). The catalysed reaction is 5,6-dihydrouridine(20) in tRNA + NAD(+) = uridine(20) in tRNA + NADH + H(+). It catalyses the reaction 5,6-dihydrouridine(20a) in tRNA + NADP(+) = uridine(20a) in tRNA + NADPH + H(+). It carries out the reaction 5,6-dihydrouridine(20a) in tRNA + NAD(+) = uridine(20a) in tRNA + NADH + H(+). Its function is as follows. Catalyzes the synthesis of 5,6-dihydrouridine (D), a modified base found in the D-loop of most tRNAs, via the reduction of the C5-C6 double bond in target uridines. Specifically modifies U20 and U20a in tRNAs. In Xanthomonas axonopodis pv. citri (strain 306), this protein is tRNA-dihydrouridine(20/20a) synthase.